The chain runs to 488 residues: Alpha,alpha-trehalose-phosphate synthase [UDP-forming] 56 kDa subunit (488 aa).

2 residues coordinate D-glucose 6-phosphate: tyrosine 102 and aspartate 156. UDP is bound by residues arginine 293 and lysine 298. Residues arginine 293 and lysine 298 each contribute to the UDP-alpha-D-glucose site. Arginine 331 contributes to the D-glucose 6-phosphate binding site. UDP contacts are provided by residues isoleucine 370 and 396–400 (LVSYE). UDP-alpha-D-glucose is bound by residues isoleucine 370 and 392-400 (DGMNLVSYE).

It belongs to the glycosyltransferase 20 family. As to quaternary structure, trehalose synthase/phosphatase complex contains three or four polypeptides of 56 kDa (TPS1), 102 kDa (TPS2), 115 kDa (TPS3) and 123 kDa (TSL1).

It carries out the reaction D-glucose 6-phosphate + UDP-alpha-D-glucose = alpha,alpha-trehalose 6-phosphate + UDP + H(+). It participates in carbohydrate biosynthesis. Functionally, synthase catalytic subunit of the trehalose synthase complex that catalyzes the production of trehalose from glucose-6-phosphate and UDP-alpha-D-glucose in a two step process. Can function independently of the complex. In Kluyveromyces lactis (strain ATCC 8585 / CBS 2359 / DSM 70799 / NBRC 1267 / NRRL Y-1140 / WM37) (Yeast), this protein is Alpha,alpha-trehalose-phosphate synthase [UDP-forming] 56 kDa subunit.